Here is a 597-residue protein sequence, read N- to C-terminus: Probable potassium transport system protein Kup 1 (597 aa).

10 consecutive transmembrane segments (helical) span residues 23-43, 72-92, 98-118, 143-163, 174-194, 226-246, 273-293, 303-323, 329-349, and 353-373; these read GAWLVIPAMLGGAAFLADSVL, LTMMITAVIIVILFAVQSRGT, VFGSVVMVWFAFLAIVGVVAI, ATGLALMGTVFLSTTGAEALY, IYFTWPFIKVALVLNYFGQGA, AVVLSVTAGIIASQALITGAF, LYIPVVNVVLCVATLAVLLLF, YGLALTITMITTTILLGIYLW, FGAVVFTIVFLAIQVLFFAAS, and FLHGGWFTLLLTLAILMIMYT.

It belongs to the HAK/KUP transporter (TC 2.A.72) family.

The protein resides in the cell membrane. The catalysed reaction is K(+)(in) + H(+)(in) = K(+)(out) + H(+)(out). Functionally, transport of potassium into the cell. Likely operates as a K(+):H(+) symporter. This chain is Probable potassium transport system protein Kup 1 (kup1), found in Bifidobacterium longum (strain NCC 2705).